The primary structure comprises 244 residues: Protein crossbronx (244 aa).

Residues 20-176 form the UBC core domain; it reads QQEYKILAEY…VQENIKESKE (157 aa). The interval 209-244 is disordered; the sequence is AGRSKQTEPSAQQGNGGHATGLSWVKEGEFKPLSIE.

It belongs to the ubiquitin-conjugating enzyme family. FTS subfamily.

The sequence is that of Protein crossbronx (cbx) from Drosophila sechellia (Fruit fly).